The following is an 88-amino-acid chain: EMBRYO SURROUNDING FACTOR 1-like protein 7 (88 aa).

An N-terminal signal peptide occupies residues 1–22 (MKSSHIALICIVMFSLFALHES). Intrachain disulfides connect C41–C57, C46–C85, C55–C81, and C58–C68.

The protein belongs to the MEG family. As to expression, expressed in leaves and flowers.

The chain is EMBRYO SURROUNDING FACTOR 1-like protein 7 (ESFL7) from Arabidopsis thaliana (Mouse-ear cress).